The sequence spans 367 residues: Phospho-N-acetylmuramoyl-pentapeptide-transferase (367 aa).

10 helical membrane-spanning segments follow: residues Val27 to Trp47, Thr73 to Leu93, Tyr97 to Trp117, Trp132 to Ala152, Thr167 to Gly187, Gly200 to Thr220, Ala237 to Phe257, Val264 to Ile284, Ile289 to Val309, and Gln344 to Leu364.

It belongs to the glycosyltransferase 4 family. MraY subfamily. Mg(2+) is required as a cofactor.

The protein resides in the cell inner membrane. The enzyme catalyses UDP-N-acetyl-alpha-D-muramoyl-L-alanyl-gamma-D-glutamyl-meso-2,6-diaminopimeloyl-D-alanyl-D-alanine + di-trans,octa-cis-undecaprenyl phosphate = di-trans,octa-cis-undecaprenyl diphospho-N-acetyl-alpha-D-muramoyl-L-alanyl-D-glutamyl-meso-2,6-diaminopimeloyl-D-alanyl-D-alanine + UMP. It participates in cell wall biogenesis; peptidoglycan biosynthesis. Catalyzes the initial step of the lipid cycle reactions in the biosynthesis of the cell wall peptidoglycan: transfers peptidoglycan precursor phospho-MurNAc-pentapeptide from UDP-MurNAc-pentapeptide onto the lipid carrier undecaprenyl phosphate, yielding undecaprenyl-pyrophosphoryl-MurNAc-pentapeptide, known as lipid I. This Dechloromonas aromatica (strain RCB) protein is Phospho-N-acetylmuramoyl-pentapeptide-transferase.